Consider the following 142-residue polypeptide: Hemoglobin subunit alpha-A (142 aa).

The region spanning 2–142 (VLSAADKTNV…VGAVLTAKYR (141 aa)) is the Globin domain. Histidine 59 is a binding site for O2. Histidine 88 lines the heme b pocket.

The protein belongs to the globin family. In terms of assembly, heterotetramer of two alpha chains and two beta chains. In terms of tissue distribution, red blood cells.

Its function is as follows. Involved in oxygen transport from the lung to the various peripheral tissues. The chain is Hemoglobin subunit alpha-A (HBAA) from Anas platyrhynchos (Mallard).